Here is a 192-residue protein sequence, read N- to C-terminus: Type-4 uracil-DNA glycosylase (192 aa).

2 residues coordinate [4Fe-4S] cluster: Cys18 and Cys21. Residues 45 to 47 (GEG), Phe59, and Asn85 each bind uracil. [4Fe-4S] cluster is bound by residues Cys89 and Cys105. His161 provides a ligand contact to uracil.

This sequence belongs to the uracil-DNA glycosylase (UDG) superfamily. Type 4 (UDGa) family.

The catalysed reaction is Hydrolyzes single-stranded DNA or mismatched double-stranded DNA and polynucleotides, releasing free uracil.. Its function is as follows. Removes uracil bases that are present in DNA as a result of either deamination of cytosine or misincorporation of dUMP instead of dTMP. Can remove uracil from double-stranded DNA containing either a U/G or U/A base pair as well as from single-stranded DNA. The sequence is that of Type-4 uracil-DNA glycosylase from Thermotoga maritima (strain ATCC 43589 / DSM 3109 / JCM 10099 / NBRC 100826 / MSB8).